A 593-amino-acid chain; its full sequence is Putative auxin response factor 15 (593 aa).

The TF-B3 DNA-binding region spans 126–228 (FTKVLTASDI…ELRVGIRRAR (103 aa)). One can recognise a PB1 domain in the interval 511–592 (RTCTKVQMQG…MVKRIYIQKR (82 aa)).

This sequence belongs to the ARF family. In terms of assembly, homodimers and heterodimers.

The protein localises to the nucleus. Functionally, auxin response factors (ARFs) are transcriptional factors that bind specifically to the DNA sequence 5'-TGTCTC-3' found in the auxin-responsive promoter elements (AuxREs). Could act as transcriptional activator or repressor. Formation of heterodimers with Aux/IAA proteins may alter their ability to modulate early auxin response genes expression. The polypeptide is Putative auxin response factor 15 (ARF15) (Arabidopsis thaliana (Mouse-ear cress)).